A 155-amino-acid polypeptide reads, in one-letter code: MADQNERAFQKQFGVNLNRKVKPGITKKKLLRRSRDVGLGFKTPREAIDGTYIDKKCPWTGDVRIRGRILTGVVRKAKMQRTIVIRRDYLHFVRKYSRFEKRHRNMSVHCSPVFRDVEHGDIVTIGECRPLSKTVRFNVLKVSKGQGAKKSFKKY.

The residue at position 2 (Ala2) is an N-acetylalanine.

This sequence belongs to the universal ribosomal protein uS17 family.

This Drosophila yakuba (Fruit fly) protein is Small ribosomal subunit protein uS17.